Consider the following 1145-residue polypeptide: Adenylate cyclase type 3 (1145 aa).

At 1–79 (MPRNQGFSDP…FKRQRHETLL (79 aa)) the chain is on the cytoplasmic side. Helical transmembrane passes span 80–100 (VLVV…AVVF), 105–125 (LAPL…FVLC), 139–159 (VPYL…GLNF), 173–193 (AFFV…IVII), and 226–246 (ILAN…SYYM). Residues Asp324, Ile325, and Asp368 each contribute to the Mg(2+) site. Residues 324–329 (DIVGFT) and 366–368 (LGD) contribute to the ATP site. Residues 381–401 (EDHAVCSILMGLAMVEAISYV) traverse the membrane as a helical segment. Residues 402 to 631 (REKTKTGVDM…RYSVEKEKQS (230 aa)) lie on the Cytoplasmic side of the membrane. ATP is bound at residue Arg412. A Glycyl lysine isopeptide (Lys-Gly) (interchain with G-Cter in SUMO3) cross-link involves residue Lys465. Positions 504 to 564 (QNGLNGSAVP…DNPSFPNPRR (61 aa)) are disordered. 2 stretches are compositionally biased toward low complexity: residues 516–526 (APASSKPSSPA) and 535–544 (GSAHASGSTS). Position 524 is a phosphoserine (Ser524). The residue at position 579 (Ser579) is a Phosphoserine. The next 3 membrane-spanning stretches (helical) occupy residues 632–652 (GAAF…EILI), 663–683 (FVVG…AIFP), and 707–727 (WAML…LSCL). Asn735 carries an N-linked (GlcNAc...) asparagine glycan. The next 3 membrane-spanning stretches (helical) occupy residues 753 to 773 (YNYV…VSHM), 774 to 794 (VKLT…LYAW), and 834 to 854 (LPLV…MLSF). Residues 855–1145 (YYFSRHVEKL…TLPHQVVDNP (291 aa)) lie on the Cytoplasmic side of the membrane. Residues Lys976, 1063–1065 (DIW), and 1070–1074 (NVASR) each bind ATP. Ser1077 is subject to Phosphoserine; by CaMK2. Lys1110 is an ATP binding site.

This sequence belongs to the adenylyl cyclase class-4/guanylyl cyclase family. The cofactor is Mg(2+). It depends on Mn(2+) as a cofactor. N-glycosylated. In terms of processing, rapidly phosphorylated after stimulation by odorants or forskolin. Phosphorylation by CaMK2 at Ser-1077 down-regulates enzyme activity. Post-translationally, sumoylated. Sumoylation is required for targeting of olfactory cilia. In terms of tissue distribution, detected in the acrosomal region of epididymal spermatozoa, the acrosomal region of round spermatids and in elongating spermatids. Detected in cilia in the olfactory epithelium (at protein level). Detected in olfactory epithelium neurons. Detected in brain, testis, late pachytene spermatocytes, round spermatids and elongating spermatids.

It is found in the cell membrane. It localises to the cell projection. The protein resides in the cilium. Its subcellular location is the golgi apparatus. The protein localises to the cytoplasm. The catalysed reaction is ATP = 3',5'-cyclic AMP + diphosphate. With respect to regulation, specifically activated by the G alpha protein GNAL/G(olf) in signaling cascades triggered by odorant receptors. Activated by forskolin. After forskolin treatment, activity is further increased by calcium/calmodulin. In the absence of forskolin, calcium/calmodulin has little effect on enzyme activity. Its function is as follows. Catalyzes the formation of the signaling molecule cAMP in response to G-protein signaling. Participates in signaling cascades triggered by odorant receptors via its function in cAMP biosynthesis: specifically activated by G alpha protein GNAL/G(olf) in olfactory epithelium. Required for the perception of odorants. Required for normal sperm motility and normal male fertility. Plays a role in regulating insulin levels and body fat accumulation in response to a high fat diet. The protein is Adenylate cyclase type 3 (Adcy3) of Mus musculus (Mouse).